Consider the following 740-residue polypeptide: Catalase-peroxidase (740 aa).

Basic and acidic residues predominate over residues 1–16; it reads MSENHDAIVTDAKTEE. The disordered stretch occupies residues 1–38; that stretch reads MSENHDAIVTDAKTEETDGCPVAHGRAPHPTQGGGNRQ. The tryptophyl-tyrosyl-methioninium (Trp-Tyr) (with M-257) cross-link spans 108-231; the sequence is WHSAGTYRIS…LGAVQMGLIY (124 aa). Residue H109 is the Proton acceptor of the active site. The segment at residues 231-257 is a cross-link (tryptophyl-tyrosyl-methioninium (Tyr-Met) (with W-108)); sequence YVNPEGPNGNPDPIAAARDIRETFRRM. H272 lines the heme b pocket.

This sequence belongs to the peroxidase family. Peroxidase/catalase subfamily. Homodimer. Heme b serves as cofactor. Post-translationally, formation of the three residue Trp-Tyr-Met cross-link is important for the catalase, but not the peroxidase activity of the enzyme.

The enzyme catalyses H2O2 + AH2 = A + 2 H2O. It catalyses the reaction 2 H2O2 = O2 + 2 H2O. Bifunctional enzyme with both catalase and broad-spectrum peroxidase activity. This Streptomyces coelicolor (strain ATCC BAA-471 / A3(2) / M145) protein is Catalase-peroxidase.